The primary structure comprises 128 residues: Cystatin-12 (128 aa).

An N-terminal signal peptide occupies residues Met-1–Phe-21. Cystine bridges form between Cys-82–Cys-92 and Cys-105–Cys-125. A glycan (N-linked (GlcNAc...) asparagine) is linked at Asn-122.

This sequence belongs to the cystatin family. Located at the very proximal caput epididymis (at protein level). Expressed in epididymis, Sertoli cells and testis. Also found to be weakly expressed in ovary and prostate.

Its subcellular location is the secreted. In terms of biological role, may play a specialized role in spermatogenesis. The chain is Cystatin-12 (Cst12) from Mus musculus (Mouse).